We begin with the raw amino-acid sequence, 505 residues long: AMP phosphorylase (505 aa).

Residues Gly-170, 196 to 201 (SRAITS), and Thr-205 contribute to the AMP site. Residue Asp-258 is the Proton donor of the active site. AMP-binding residues include Ser-266 and Lys-290.

This sequence belongs to the thymidine/pyrimidine-nucleoside phosphorylase family. Type 2 subfamily.

The enzyme catalyses AMP + phosphate = alpha-D-ribose 1,5-bisphosphate + adenine. It catalyses the reaction CMP + phosphate = cytosine + alpha-D-ribose 1,5-bisphosphate. It carries out the reaction UMP + phosphate = alpha-D-ribose 1,5-bisphosphate + uracil. Its function is as follows. Catalyzes the conversion of AMP and phosphate to adenine and ribose 1,5-bisphosphate (R15P). Exhibits phosphorylase activity toward CMP and UMP in addition to AMP. Functions in an archaeal AMP degradation pathway, together with R15P isomerase and RubisCO. The polypeptide is AMP phosphorylase (Methanococcus maripaludis (strain C7 / ATCC BAA-1331)).